Reading from the N-terminus, the 184-residue chain is Nucleoporin-62 C-terminal-like protein (184 aa).

The stretch at 117 to 151 (RILHGEVNKVKLDQKRLEQELDFILSQQQELEFLL) forms a coiled coil.

The protein belongs to the nucleoporin NSP1/NUP62 family.

In Homo sapiens (Human), this protein is Nucleoporin-62 C-terminal-like protein (NUP62CL).